We begin with the raw amino-acid sequence, 416 residues long: Tumor necrosis factor receptor superfamily member 19 (416 aa).

A signal peptide spans methionine 1–cysteine 29. Residues glutamate 30–leucine 170 are Extracellular-facing. TNFR-Cys repeat units lie at residues aspartate 33 to cysteine 72 and proline 74 to cysteine 114. Disulfide bonds link cysteine 34/cysteine 46, cysteine 49/cysteine 62, cysteine 52/cysteine 72, cysteine 75/cysteine 89, cysteine 92/cysteine 106, cysteine 95/cysteine 114, cysteine 117/cysteine 135, and cysteine 138/cysteine 149. The N-linked (GlcNAc...) asparagine glycan is linked to asparagine 105. One copy of the TNFR-Cys 3; truncated repeat lies at aspartate 116–cysteine 149. A helical membrane pass occupies residues alanine 171 to isoleucine 191. Over tyrosine 192–alanine 416 the chain is Cytoplasmic. The segment at leucine 321–alanine 416 is disordered. Polar residues-rich tracts occupy residues glutamate 331–glycine 351, leucine 360–threonine 370, and valine 381–glutamine 396.

In terms of assembly, associates with TRAF1, TRAF2, TRAF3 and TRAF5. Interacts with LINGO1. Highly expressed in adult brain, and in embryos from day 11-17, but not earlier. Detected in embryonic brain and epithelium, and at lower levels in adult heart, lung and liver. In neonatal mice, mainly in hair follicles and neuron-like cells in the cerebellum, but not in the skin epidermis. Isoform 3 was found in embryonic day 17.5 skin but not in brain and liver.

It is found in the cell membrane. Its subcellular location is the secreted. In terms of biological role, can mediate activation of c-Jun and NF-kappa-B. May promote caspase-independent cell death. Isoform 2 and isoform 3 may act as decoy receptors. The polypeptide is Tumor necrosis factor receptor superfamily member 19 (Tnfrsf19) (Mus musculus (Mouse)).